A 130-amino-acid polypeptide reads, in one-letter code: Small ribosomal subunit protein uS8 (130 aa).

It belongs to the universal ribosomal protein uS8 family. Part of the 30S ribosomal subunit. Contacts proteins S5 and S12.

Functionally, one of the primary rRNA binding proteins, it binds directly to 16S rRNA central domain where it helps coordinate assembly of the platform of the 30S subunit. This is Small ribosomal subunit protein uS8 from Aeromonas hydrophila subsp. hydrophila (strain ATCC 7966 / DSM 30187 / BCRC 13018 / CCUG 14551 / JCM 1027 / KCTC 2358 / NCIMB 9240 / NCTC 8049).